Reading from the N-terminus, the 86-residue chain is Small ribosomal subunit protein bS20 (86 aa).

Belongs to the bacterial ribosomal protein bS20 family.

In terms of biological role, binds directly to 16S ribosomal RNA. This is Small ribosomal subunit protein bS20 from Oceanobacillus iheyensis (strain DSM 14371 / CIP 107618 / JCM 11309 / KCTC 3954 / HTE831).